The sequence spans 238 residues: MSVAAYKRIMLKLSGEALMGDDSYGINEDVVSRIVAEIAEVNRLGVQVGVVIGGGNIFRGMKGAASGMDRATADYMGMLATVMNAMALADAFRRAQVEARVQSALRIDQVVEPYIRGRAIRHMEEGRVVIFAAGTGNPFFTTDTAAALRGSEMAAQIVLKATKVDGVYTADPKKDPQAQRYHRISFDEAIGRNLAVLDATAFALCRDQKLPINVFSIFKPGALKRVVLGEDEGTLVHS.

12–15 serves as a coordination point for ATP; that stretch reads KLSG. UMP is bound at residue glycine 54. 2 residues coordinate ATP: glycine 55 and arginine 59. Residues aspartate 74 and 135 to 142 contribute to the UMP site; that span reads TGNPFFTT. Threonine 162, tyrosine 168, and aspartate 171 together coordinate ATP.

It belongs to the UMP kinase family. As to quaternary structure, homohexamer.

Its subcellular location is the cytoplasm. The enzyme catalyses UMP + ATP = UDP + ADP. It participates in pyrimidine metabolism; CTP biosynthesis via de novo pathway; UDP from UMP (UMPK route): step 1/1. With respect to regulation, inhibited by UTP. In terms of biological role, catalyzes the reversible phosphorylation of UMP to UDP. The chain is Uridylate kinase from Aromatoleum aromaticum (strain DSM 19018 / LMG 30748 / EbN1) (Azoarcus sp. (strain EbN1)).